A 482-amino-acid chain; its full sequence is UDP-N-acetylmuramate--L-alanine ligase (482 aa).

115-121 contacts ATP; it reads GTHGKTT.

This sequence belongs to the MurCDEF family.

The protein resides in the cytoplasm. The enzyme catalyses UDP-N-acetyl-alpha-D-muramate + L-alanine + ATP = UDP-N-acetyl-alpha-D-muramoyl-L-alanine + ADP + phosphate + H(+). Its pathway is cell wall biogenesis; peptidoglycan biosynthesis. Cell wall formation. This Rhodospirillum centenum (strain ATCC 51521 / SW) protein is UDP-N-acetylmuramate--L-alanine ligase.